Here is a 470-residue protein sequence, read N- to C-terminus: Origin of replication complex subunit 4 (470 aa).

Residue 63–70 (GPRGCGKA) coordinates ATP.

The protein belongs to the ORC4 family. In terms of assembly, component of the origin recognition complex (ORC) composed of at least ORC1, ORC2, ORC3, ORC4, ORC5 and ORC6. ORC is regulated in a cell-cycle and development dependent manner. It is sequentially assembled at the exit from anaphase of mitosis and disassembled as cells enter S phase. In terms of tissue distribution, expressed in the shoot apical meristem (SAM), leaves, ears and roots (including root tips).

The protein localises to the nucleus. Its function is as follows. Component of the origin recognition complex (ORC) that binds origins of replication. DNA-binding is ATP-dependent. The specific DNA sequences that define origins of replication have not been identified yet. ORC is required to assemble the pre-replication complex necessary to initiate DNA replication. This is Origin of replication complex subunit 4 from Oryza sativa subsp. japonica (Rice).